The chain runs to 344 residues: uncharacterized protein (344 aa).

Over 1–98 (MIDFVKSRDT…NNDEIGIWNY (98 aa)) the chain is Cytoplasmic. A helical membrane pass occupies residues 99-119 (ISVAEMGGVLLFLSYWIWTCL). Residue His120 is a topological domain, lumenal. A helical transmembrane segment spans residues 121-141 (FSKIIFPAQKVICLYIFLFAL). At 142-198 (NQTLQECIEEYVFSSECIKYRQFYSVYEIIDFLRTNFYRLFVIYCALGFGITRTVPK) the chain is on the cytoplasmic side. Residues 199–219 (YLMIKGISIVIALCSVYWISL) traverse the membrane as a helical segment. Residues 220–222 (YKD) lie on the Lumenal side of the membrane. Residues 223–243 (VYVVSEIFDMIQYEVSPAIWV) form a helical membrane-spanning segment. Residues 244-273 (YSICHLLKQCTSVTTYENASKARFFRRMLN) are Cytoplasmic-facing. A helical transmembrane segment spans residues 274–294 (AFIFIFCASPMLHYLSNIIFG). The Lumenal segment spans residues 295–344 (NFDYRLSVIIGDLFTFMEKIAFPCYIMFPTHNEALAYNRNVAEEAQEKMI).

Belongs to the UPF0742 family.

It is found in the endoplasmic reticulum. The protein resides in the membrane. This is an uncharacterized protein from Schizosaccharomyces pombe (strain 972 / ATCC 24843) (Fission yeast).